The following is a 248-amino-acid chain: Segregation and condensation protein A (248 aa).

This sequence belongs to the ScpA family. Component of a cohesin-like complex composed of ScpA, ScpB and the Smc homodimer, in which ScpA and ScpB bind to the head domain of Smc. The presence of the three proteins is required for the association of the complex with DNA.

It localises to the cytoplasm. In terms of biological role, participates in chromosomal partition during cell division. May act via the formation of a condensin-like complex containing Smc and ScpB that pull DNA away from mid-cell into both cell halves. This is Segregation and condensation protein A from Bacillus cytotoxicus (strain DSM 22905 / CIP 110041 / 391-98 / NVH 391-98).